A 258-amino-acid chain; its full sequence is L-aspartate dehydrogenase 1 (258 aa).

NAD(+) is bound by residues Ala-121 and Asn-181. His-211 is an active-site residue.

Belongs to the L-aspartate dehydrogenase family.

The enzyme catalyses L-aspartate + NADP(+) + H2O = oxaloacetate + NH4(+) + NADPH + H(+). The catalysed reaction is L-aspartate + NAD(+) + H2O = oxaloacetate + NH4(+) + NADH + H(+). It functions in the pathway cofactor biosynthesis; NAD(+) biosynthesis; iminoaspartate from L-aspartate (dehydrogenase route): step 1/1. Its function is as follows. Specifically catalyzes the NAD or NADP-dependent dehydrogenation of L-aspartate to iminoaspartate. In Bordetella parapertussis (strain 12822 / ATCC BAA-587 / NCTC 13253), this protein is L-aspartate dehydrogenase 1.